A 484-amino-acid chain; its full sequence is MTIRHQGQQYRPRMAFLQKIEALVKDMQNPDTGVKTQSQRVLVTSVPHAMTGGDVLQWIIQRLWISSLEAQNLGNFIVKYGYIYPLQDPKNLILKPDSSLYRFQTPYFWPTQQWPAEDTDYAIYLAKRNIKKKGILEEYEKENYNFLNKKINYKWDFVIMQAKEQYRAGKERNKADRYALDCQEKAYWLVHRCPPGMNDVLDYGLDRVTNPNEVKKQTITAVKKEIMYYQQALMRSTVKSSVSLGGIVKYSEQFSSNDAIMSGCLPSNPWITDDTQFWDLNAKLVEIPTKMRVERWAFNFSELIRDPKGRQSFQYFLRKEFSGENLGFWEACEDLKYGDQSKVKEKAEEIYKLFLAPGARRWINIDGKTMDITVKGLKHPHRYVLDAAQTHIYMLMKKDSYARYLKSPIYKEMLAKAIEPQETTKKSSTLPFIRRHLRSSPSPVILRQLEEEAKAREAANTVDITQVMSKLDRRSLLKKELPPK.

Residues 30–105 (PDTGVKTQSQ…PDSSLYRFQT (76 aa)) form the DEP domain. The G protein gamma domain maps to 219–280 (ITAVKKEIMY…ITDDTQFWDL (62 aa)). An RGS domain is found at 299 to 414 (NFSELIRDPK…LKSPIYKEML (116 aa)).

In terms of assembly, heterodimer with Gbeta5. Interacts with RGS7BP, leading to regulate the subcellular location of the heterodimer formed with Gbeta5. Component of the RGS9-1-Gbeta5 complex composed of RGS9 (RGS9-1), Gbeta5 (GNB5) and RGS9BP. Post-translationally, phosphorylation is decreased by light exposition.

The protein resides in the membrane. Its function is as follows. Inhibits signal transduction by increasing the GTPase activity of G protein alpha subunits thereby driving them into their inactive GDP-bound form. Binds to G(t)-alpha. Involved in phototransduction; key element in the recovery phase of visual transduction. The chain is Regulator of G-protein signaling 9 from Tamias striatus (Eastern chipmunk).